The chain runs to 474 residues: Cyclin-dependent kinase 18 (474 aa).

Ser14, Ser74, Ser89, Ser98, Ser117, and Ser132 each carry phosphoserine. Residues 44 to 93 (NLQLGPLGRDPPQECSTFSPTDSGEEPGQLSPGVQFQRRQNQRRFSMEDV) form a disordered region. Residues 144 to 425 (YVKLDKLGEG…AEAALSHSYF (282 aa)) form the Protein kinase domain. Residues 150 to 158 (LGEGTYATV) and Lys173 contribute to the ATP site. Residue Asp265 is the Proton acceptor of the active site. A phosphoserine mark is found at Ser440 and Ser443.

It belongs to the protein kinase superfamily. CMGC Ser/Thr protein kinase family. CDC2/CDKX subfamily. As to expression, isoform 2 expression is limited to several subcortical nuclei of the basal gangli and the spinal cord. Isoform 1 is widely expressed.

It carries out the reaction L-seryl-[protein] + ATP = O-phospho-L-seryl-[protein] + ADP + H(+). It catalyses the reaction L-threonyl-[protein] + ATP = O-phospho-L-threonyl-[protein] + ADP + H(+). Functionally, may play a role in signal transduction cascades in terminally differentiated cells. This Homo sapiens (Human) protein is Cyclin-dependent kinase 18 (CDK18).